Here is a 333-residue protein sequence, read N- to C-terminus: Probable tRNA pseudouridine synthase B (333 aa).

Residues 1–14 (MKCPSREVFSKFEE) are compositionally biased toward basic and acidic residues. Residues 1-27 (MKCPSREVFSKFEESTNPQWGKPPSQR) are disordered. The active-site Nucleophile is the D71. Residues 238–313 (LPKIWVRDSA…LVARTDRVVM (76 aa)) enclose the PUA domain.

This sequence belongs to the pseudouridine synthase TruB family. Type 2 subfamily.

The catalysed reaction is uridine(55) in tRNA = pseudouridine(55) in tRNA. In terms of biological role, could be responsible for synthesis of pseudouridine from uracil-55 in the psi GC loop of transfer RNAs. The polypeptide is Probable tRNA pseudouridine synthase B (Pyrobaculum aerophilum (strain ATCC 51768 / DSM 7523 / JCM 9630 / CIP 104966 / NBRC 100827 / IM2)).